The sequence spans 116 residues: uncharacterized protein (116 aa).

Positions 77-116 (SATSHYPKADDPQRFARSVSRGPSRVRRPARNSASRPVRR) are disordered.

This is an uncharacterized protein from Frog virus 3 (isolate Goorha) (FV-3).